A 96-amino-acid chain; its full sequence is MKLRPLHDRIIVKRLEGEEKTAGGLFIPDTAKEKPQKGEVIAVGNGKKNDEGKCAPLDVKVGDSILFGKYAGTEVKVDGDEFLMMREDDVLAVIEK.

This sequence belongs to the GroES chaperonin family. Heptamer of 7 subunits arranged in a ring. Interacts with the chaperonin GroEL.

Its subcellular location is the cytoplasm. Its function is as follows. Together with the chaperonin GroEL, plays an essential role in assisting protein folding. The GroEL-GroES system forms a nano-cage that allows encapsulation of the non-native substrate proteins and provides a physical environment optimized to promote and accelerate protein folding. GroES binds to the apical surface of the GroEL ring, thereby capping the opening of the GroEL channel. The protein is Co-chaperonin GroES of Trichlorobacter lovleyi (strain ATCC BAA-1151 / DSM 17278 / SZ) (Geobacter lovleyi).